Reading from the N-terminus, the 231-residue chain is Eukaryotic translation initiation factor 4E-1 (231 aa).

EIF4G-binding regions lie at residues 56–59 (HPLE) and 66–102 (FDNPTTKSRQTAWGSSLRNVYTFSTVEDFWGAYNNIH). Residues 74–79 (RQTAWG), Lys106, and 124–125 (WE) contribute to the mRNA site. Cys129 and Cys167 are disulfide-bonded. The EIF4G-binding stretch occupies residues 150-159 (YTLLAMIGHQ). Residues 174–179 (RAKGEK) and 219–223 (KRLDR) contribute to the mRNA site.

It belongs to the eukaryotic initiation factor 4E family. EIF4F is a multi-subunit complex, the composition of which varies with external and internal environmental conditions. It is composed of at least EIF4A, EIF4E and EIF4G. EIF4E is also known to interact with other partners. In higher plants two isoforms of EIF4F have been identified, named isoform EIF4F and isoform EIF(iso)4F. Isoform EIF4F has subunits p220 and p26, whereas isoform EIF(iso)4F has subunits p82 and p28. In terms of assembly, (Microbial infection) Interacts with potyvirus viral genome-linked protein (VPg); mostly with tobacco etch virus (TEV-HAT) VPg and, to a lower extent, with potato virus Y (PVY-LYE84 and PVY-LYE90) and pepper mottle virus (PepMoV) VPg. Post-translationally, according to the redox status, the Cys-129-Cys-167 disulfide bridge may have a role in regulating protein function by affecting its ability to bind capped mRNA.

It is found in the nucleus. The protein resides in the cytoplasm. Its function is as follows. Component of the protein complex eIF4F, which is involved in the recognition of the mRNA cap, ATP-dependent unwinding of 5'-terminal secondary structure and recruitment of mRNA to the ribosome. Recognizes and binds the 7-methylguanosine-containing mRNA cap during an early step in the initiation of protein synthesis and facilitates ribosome binding by inducing the unwinding of the mRNAs secondary structures. Key component of recessive resistance to potyviruses. Functionally, (Microbial infection) Susceptibility host factor required for viral infection (e.g. potato virus Y (PVY), pepper mottle virus (PepMoV) and tobacco etch virus (TEV)) by recruiting viral RNAs to the host ribosomal complex via an interaction with viral genome-linked protein (VPg). The polypeptide is Eukaryotic translation initiation factor 4E-1 (Solanum lycopersicum (Tomato)).